Consider the following 227-residue polypeptide: Thiocyanate methyltransferase 1 (227 aa).

Residues Trp36, Trp40, Trp47, and Gly74 each coordinate S-adenosyl-L-methionine. Ser86 carries the phosphoserine modification. S-adenosyl-L-methionine is bound by residues Asp95, 123-124 (DV), and Tyr139.

The protein belongs to the class I-like SAM-binding methyltransferase superfamily. TPMT family. Expressed in shoots, leaves, stems, inflorescences, flowers and green siliques.

The enzyme catalyses thiocyanate + S-adenosyl-L-methionine = methyl thiocyanate + S-adenosyl-L-homocysteine. S-adenosyl-L-methionine-dependent methyltransferase. Involved in glucosinolate metabolism and defense against phytopathogens. Highly reactive to thiocyanate (NCS(-)) derived from myrosinase-mediated hydrolysis of glucosinolates upon tissue damage. The sequence is that of Thiocyanate methyltransferase 1 from Arabidopsis thaliana (Mouse-ear cress).